A 318-amino-acid chain; its full sequence is Protein disulfide-isomerase MPD1 (318 aa).

The signal sequence occupies residues 1–21 (MLFLNIIKLLLGLFIMNEVKA). Positions 22 to 158 (QNFYDSDPHI…SLSRIRSYVK (137 aa)) constitute a Thioredoxin domain. The N-linked (GlcNAc...) asparagine glycan is linked to Asn47. Cys59 and Cys62 are disulfide-bonded. Asn307 is a glycosylation site (N-linked (GlcNAc...) asparagine). The short motif at 315–318 (HDEL) is the Prevents secretion from ER element.

Belongs to the protein disulfide isomerase family. In terms of assembly, interacts with CNE1 and EPS1.

It localises to the endoplasmic reticulum lumen. It carries out the reaction Catalyzes the rearrangement of -S-S- bonds in proteins.. In terms of biological role, participates in the folding of proteins containing disulfide bonds. In Saccharomyces cerevisiae (strain ATCC 204508 / S288c) (Baker's yeast), this protein is Protein disulfide-isomerase MPD1 (MPD1).